Consider the following 396-residue polypeptide: Ribosomal RNA large subunit methyltransferase I (396 aa).

The PUA domain maps to 2–81 (SVRLVLAKGR…ESIDIAFFTR (80 aa)).

This sequence belongs to the methyltransferase superfamily. RlmI family.

The protein localises to the cytoplasm. The catalysed reaction is cytidine(1962) in 23S rRNA + S-adenosyl-L-methionine = 5-methylcytidine(1962) in 23S rRNA + S-adenosyl-L-homocysteine + H(+). Its function is as follows. Specifically methylates the cytosine at position 1962 (m5C1962) of 23S rRNA. The sequence is that of Ribosomal RNA large subunit methyltransferase I from Escherichia coli O127:H6 (strain E2348/69 / EPEC).